A 440-amino-acid polypeptide reads, in one-letter code: Ferredoxin--NADP reductase (440 aa).

In terms of domain architecture, CpcD-like spans 17-75 (SRVFVYEVVGMRQNEETDQTNYPIRKSGSVFIRVPYNRMNQEMQRITRLGGKIVTIQTV). Residues 99–142 (KSEGNGKATPVKTDSGAKAFAKPPAEEQLKKKDNKGNTMTQAKA) form a disordered region. The span at 122-133 (PAEEQLKKKDNK) shows a compositional bias: basic and acidic residues. The region spanning 155–279 (NAPFIGKVIS…TGPVGKEMLL (125 aa)) is the FAD-binding FR-type domain. FAD contacts are provided by residues 214-217 (RLYS), 235-237 (CVR), tyrosine 241, 253-255 (VCS), and threonine 294. Positions 217 and 237 each coordinate NADP(+). Residues threonine 294, 330–331 (VP), 360–361 (SR), 370–374 (RMYIQ), 399–400 (GL), and glutamate 438 each bind NADP(+).

The protein belongs to the ferredoxin--NADP reductase type 1 family. Requires FAD as cofactor.

It is found in the cellular thylakoid membrane. It carries out the reaction 2 reduced [2Fe-2S]-[ferredoxin] + NADP(+) + H(+) = 2 oxidized [2Fe-2S]-[ferredoxin] + NADPH. In Nostoc sp. (strain ATCC 29151 / PCC 7119) (Anabaena sp.), this protein is Ferredoxin--NADP reductase (petH).